The primary structure comprises 629 residues: tRNA uridine 5-carboxymethylaminomethyl modification enzyme MnmG (629 aa).

Residue 13-18 (GGGHAG) coordinates FAD. 273 to 287 (GPRYCPSIEDKITRF) contacts NAD(+).

It belongs to the MnmG family. Homodimer. Heterotetramer of two MnmE and two MnmG subunits. It depends on FAD as a cofactor.

The protein localises to the cytoplasm. In terms of biological role, NAD-binding protein involved in the addition of a carboxymethylaminomethyl (cmnm) group at the wobble position (U34) of certain tRNAs, forming tRNA-cmnm(5)s(2)U34. The polypeptide is tRNA uridine 5-carboxymethylaminomethyl modification enzyme MnmG (Aeromonas hydrophila subsp. hydrophila (strain ATCC 7966 / DSM 30187 / BCRC 13018 / CCUG 14551 / JCM 1027 / KCTC 2358 / NCIMB 9240 / NCTC 8049)).